The following is a 162-amino-acid chain: Ecotin (162 aa).

A signal peptide spans 1 to 18 (MKMFVPAVVFAASASAWA). Cys70 and Cys107 form a disulfide bridge.

The protein belongs to the protease inhibitor I11 (ecotin) family. As to quaternary structure, homodimer.

The protein resides in the periplasm. Functionally, general inhibitor of pancreatic serine proteases: inhibits chymotrypsin, trypsin, elastases, factor X, kallikrein as well as a variety of other proteases. This chain is Ecotin, found in Salmonella arizonae (strain ATCC BAA-731 / CDC346-86 / RSK2980).